Consider the following 314-residue polypeptide: Transmembrane protein 248 (314 aa).

Residues 21-41 traverse the membrane as a helical segment; sequence VVFMISVSAMAIAFLTLGYFF. A disordered region spans residues 78-106; it reads LSNDTTTPESTMTVGQARSSTQPPQSLEE. A compositionally biased stretch (polar residues) spans 80–105; the sequence is NDTTTPESTMTVGQARSSTQPPQSLE. Transmembrane regions (helical) follow at residues 179–199, 236–258, and 270–290; these read QAVF…PVTV, FWCY…TVVV, and LMHT…YAVI.

This sequence belongs to the TMEM248 family.

It is found in the membrane. The sequence is that of Transmembrane protein 248 (Tmem248) from Mus musculus (Mouse).